The chain runs to 127 residues: Fluoride-specific ion channel FluC (127 aa).

Helical transmembrane passes span 4 to 24 (LLLVAAGGAVGSVARYLVGVG), 36 to 56 (GTFTVNVVGGFLMGCLASWLA), 72 to 92 (VGVLGGFTTFSSFSLETALMI), and 101 to 121 (FTYSAASVLLAIAALFAGLLV). Residues Gly-76 and Thr-79 each contribute to the Na(+) site.

The protein belongs to the fluoride channel Fluc/FEX (TC 1.A.43) family.

The protein resides in the cell inner membrane. It carries out the reaction fluoride(in) = fluoride(out). Na(+) is not transported, but it plays an essential structural role and its presence is essential for fluoride channel function. Fluoride-specific ion channel. Important for reducing fluoride concentration in the cell, thus reducing its toxicity. This Caulobacter vibrioides (strain ATCC 19089 / CIP 103742 / CB 15) (Caulobacter crescentus) protein is Fluoride-specific ion channel FluC.